Consider the following 280-residue polypeptide: Vacuolar protein sorting-associated protein 71 (280 aa).

Polar residues predominate over residues 64–73 (RSEGDGNSIS). Residues 64–92 (RSEGDGNSISRQDDRNSKNSHSFEERYTQ) form a disordered region. Over residues 74-92 (RQDDRNSKNSHSFEERYTQ) the composition is skewed to basic and acidic residues. Zn(2+) is bound by residues C244, C247, C256, C259, C264, C268, H272, and C277. An HIT-type zinc finger spans residues 244–277 (CSICGGYDSISSCVNCGNKICSVSCFKLHNETRC).

Belongs to the SWR1 complex at least composed of ACT1, ARP4, RVB1, RVB2, ARP6, YAF9, VPS71, VPS72, SWC3, SWC4, SWC5, SWR1 and HTZ1.

The protein localises to the nucleus. Functionally, participates in the catalytic exchange of histone H2A for the H2A variant HZT1, an euchromatin-specific factor, leading to chromatin remodeling and changes in transcription of targeted genes. Indirectly involved in vacuolar protein sorting. The protein is Vacuolar protein sorting-associated protein 71 (VPS71) of Saccharomyces cerevisiae (strain ATCC 204508 / S288c) (Baker's yeast).